The primary structure comprises 346 residues: MPKVDPETQKLYDEINGLIKKFQDDHKAKADCTMQEKCGDMSDIPKIRLSSKKILKGHINKVNSVHFAGDSRHCVTGSLDGKLIIWDTWTANKVQVIPLRSAWVMTVAFSPSGNFVACGGMDNQCTVYDVNNRDASGVAKMTRELLGYEGFLSSCRFLDDTHLITGSGDMKICHWDLEKGVKTMDFNGHAGDIAGLSLSPDMNTYITGSVDKTAKLWDVREETHKQMFFGHEMDVNSVCYHPSGNGFASASEDQTARLYDIRADQQIALYEPPQKNTGFTSCALSTSGRYLLCSGIEGNIHSFDTMKVCHNGMLQGHENRITCISLSPNGMCLASTSWDQQVRLWL.

WD repeat units lie at residues 57-96 (GHINKVNSVHFAGDSRHCVTGSLDGKLIIWDTWTANKVQV), 99-138 (LRSAWVMTVAFSPSGNFVACGGMDNQCTVYDVNNRDASGV), 147-185 (GYEGFLSSCRFLDDTHLITGSGDMKICHWDLEKGVKTMD), 188-227 (GHAGDIAGLSLSPDMNTYITGSVDKTAKLWDVREETHKQM), 230-269 (GHEMDVNSVCYHPSGNGFASASEDQTARLYDIRADQQIAL), 274-313 (QKNTGFTSCALSTSGRYLLCSGIEGNIHSFDTMKVCHNGM), and 316-346 (GHENRITCISLSPNGMCLASTSWDQQVRLWL).

Belongs to the WD repeat G protein beta family. In terms of assembly, g proteins are composed of 3 units, alpha, beta and gamma. Interacts with Ggammae/Guanine nucleotide-binding protein subunit gamma-e.

Its function is as follows. Guanine nucleotide-binding proteins (G proteins) are involved as modulators or transducers in various transmembrane signaling systems. The beta and gamma chains are required for the GTPase activity, for replacement of GDP by GTP, and for G protein-effector interaction. This Calliphora vicina (Blue blowfly) protein is Guanine nucleotide-binding protein subunit beta-2.